The primary structure comprises 426 residues: Enolase (426 aa).

Gln-163 contributes to the (2R)-2-phosphoglycerate binding site. Catalysis depends on Glu-205, which acts as the Proton donor. The Mg(2+) site is built by Asp-242, Glu-286, and Asp-313. (2R)-2-phosphoglycerate is bound by residues Lys-338, Arg-367, Ser-368, and Lys-389. Lys-338 acts as the Proton acceptor in catalysis.

This sequence belongs to the enolase family. The cofactor is Mg(2+).

The protein resides in the cytoplasm. It localises to the secreted. Its subcellular location is the cell surface. The catalysed reaction is (2R)-2-phosphoglycerate = phosphoenolpyruvate + H2O. Its pathway is carbohydrate degradation; glycolysis; pyruvate from D-glyceraldehyde 3-phosphate: step 4/5. In terms of biological role, catalyzes the reversible conversion of 2-phosphoglycerate (2-PG) into phosphoenolpyruvate (PEP). It is essential for the degradation of carbohydrates via glycolysis. The sequence is that of Enolase from Helicobacter pylori (strain ATCC 700392 / 26695) (Campylobacter pylori).